A 2339-amino-acid polypeptide reads, in one-letter code: Inverse autotransporter adhesin YeeJ (2339 aa).

Residues 1 to 26 (MGIKLRRLTAGICLITQLAFPMAAAA) form the signal peptide. The region spanning 50-98 (VPYTLGALESAQSVAERFGISVAELRKLNQFRTFARGFDNVRQGDELDV) is the LysM domain. The interval 125–400 (TSQQIGSLLA…SRYDLVDRNN (276 aa)) is inverse autotransporter. Residues 513 to 605 (QKDSSVSLST…GVDAAKAPAV (93 aa)) are invasin 3 domain. Big-1 domains follow at residues 721–815 (IATL…VSFV), 822–913 (QVDL…VNFI), 920–1017 (ALTL…MTFV), 1024–1121 (VVVL…VTFV), 1128–1221 (QVVL…VHFI), 1229–1331 (IIEL…SINV), 1339–1432 (HLTL…VTYV), 1439–1535 (EITL…VNFI), 1542–1639 (QVNL…VTLI), 1646–1730 (KLAS…PTEV), 1746–1837 (ITSL…LEAI), 1840–1934 (KLTL…VKVT), and 1942–2034 (VASF…ITLV). The tract at residues 2236-2339 (KSWWVNAGEA…FAYATCYKNL (104 aa)) is C-type lectin domain.

Belongs to the intimin/invasin family.

The protein localises to the cell outer membrane. In terms of biological role, a cryptic inverse autotransporter, it is not expressed in wild-type strain MG1655. Upon overexpression shows increased adherence to polyvinyl chloride (PVC) plates and increased mature biofilm formation. Probably binds peptidoglycan. This chain is Inverse autotransporter adhesin YeeJ (yeeJ), found in Escherichia coli (strain K12).